A 116-amino-acid chain; its full sequence is Putative transmembrane protein ORF116 (116 aa).

Helical transmembrane passes span 20-40, 53-73, and 76-96; these read IVTLSVGIALLVLANAFAYAL, LLGGIVLLVLSMLLTLSTNSI, and FRGAFTFAIGEIIIGGLDVIN.

The protein localises to the host membrane. The protein is Putative transmembrane protein ORF116 of Acidianus bottle-shaped virus (isolate Italy/Pozzuoli) (ABV).